The following is a 397-amino-acid chain: 2-acyl-1-lysophosphatidylinositol acyltransferase (397 aa).

Residues 112 to 117 (HQIYTD) carry the HXXXXD motif motif.

The protein belongs to the 1-acyl-sn-glycerol-3-phosphate acyltransferase family.

It localises to the lipid droplet. It carries out the reaction 1-heptadecanoyl-sn-glycero-3-phosphate + octadecanoyl-CoA = 1-heptadecanoyl-2-octadecanoyl-sn-glycero-3-phosphate + CoA. The catalysed reaction is 1-heptadecanoyl-sn-glycero-3-phosphate + tetradecanoyl-CoA = 1-heptadecanoyl-2-tetradecanoyl-sn-glycero-3-phosphate + CoA. The enzyme catalyses 1-heptadecanoyl-sn-glycero-3-phosphate + hexadecanoyl-CoA = 1-heptadecanoyl-2-hexadecanoyl-sn-glycero-3-phosphate + CoA. Its function is as follows. Acyltransferase with lysophosphatidic acid acyltransferase (LPAAT) activity. Fatty acyl substrates include 18:0-acyl-CoA, 16:0-acyl-CoA, 17:0-acyl-CoA and 14:0-acyl-CoA. Responsible for the acyl-CoA-dependent introduction of saturated very long chain fatty acids (VLCFAs) into phosphatidylinositol, transferring saturated FAs with 18 to 26 carbon atoms. Responsible for the incorporation of stearate into phosphatidylinositol. Overexpression has an effect on chromosome stability. Regulates phosphorylation and expression of glycerol-3-phosphate acyltransferase SCT1. The protein is 2-acyl-1-lysophosphatidylinositol acyltransferase of Saccharomyces cerevisiae (strain ATCC 204508 / S288c) (Baker's yeast).